Reading from the N-terminus, the 328-residue chain is Zinc chaperone YeiR (328 aa).

GTP is bound at residue 9 to 17; it reads GFLGSGKTT. Positions 63–66 match the CXCC motif motif; the sequence is CMCC. Asp155 contacts GTP. Positions 241 to 321 constitute a CobW C-terminal domain; the sequence is CGWIFDADTV…WNALQSALLK (81 aa).

The protein belongs to the SIMIBI class G3E GTPase family. ZNG1 subfamily. In terms of assembly, oligomerizes in the presence of Zn(2+).

The catalysed reaction is GTP + H2O = GDP + phosphate + H(+). With respect to regulation, GTPase activity is enhanced by Zn(2+) binding. Zinc chaperone that directly transfers zinc cofactor to target proteins, thereby activating them. Zinc is transferred from the CXCC motif in the GTPase domain to the zinc binding site in target proteins in a process requiring GTP hydrolysis. This is Zinc chaperone YeiR (yeiR) from Escherichia coli (strain K12).